We begin with the raw amino-acid sequence, 380 residues long: Cytochrome b (380 aa).

4 consecutive transmembrane segments (helical) span residues 34-54, 78-99, 114-134, and 179-199; these read FGSL…FLAM, WLIR…YLHI, WNIG…GYVL, and FFTF…VHLL. Residues His-84 and His-98 each contribute to the heme b site. Residues His-183 and His-197 each contribute to the heme b site. A ubiquinone is bound at residue His-202. Helical transmembrane passes span 227–247, 289–309, 321–341, and 348–368; these read YKDL…ALFT, LGGV…PILH, ISQL…WIGG, and FITI…ILFP.

Belongs to the cytochrome b family. As to quaternary structure, the cytochrome bc1 complex contains 3 respiratory subunits (MT-CYB, CYC1 and UQCRFS1), 2 core proteins (UQCRC1 and UQCRC2) and probably 6 low-molecular weight proteins. It depends on heme b as a cofactor.

The protein resides in the mitochondrion inner membrane. Functionally, component of the ubiquinol-cytochrome c reductase complex (complex III or cytochrome b-c1 complex) that is part of the mitochondrial respiratory chain. The b-c1 complex mediates electron transfer from ubiquinol to cytochrome c. Contributes to the generation of a proton gradient across the mitochondrial membrane that is then used for ATP synthesis. This is Cytochrome b (mt-cyb) from Pastinachus sephen (Cowtail stingray).